A 412-amino-acid chain; its full sequence is Probable beta-1,4-xylosyltransferase IRX10 (412 aa).

The chain crosses the membrane as a helical; Signal-anchor for type II membrane protein span at residues 1-21 (MKIHSCLSAILLFLFFSASSA). The Lumenal portion of the chain corresponds to 22-412 (KQNVRTERIS…AGPVADLKPW (391 aa)). N-linked (GlcNAc...) asparagine glycans are attached at residues Asn139 and Asn400.

The protein belongs to the glycosyltransferase 47 family. In terms of tissue distribution, limited to xylem cells. Expressed in the root tip, xylem cells of roots, and in the vasculature of roots, cotyledons and leaves.

The protein resides in the golgi apparatus membrane. Involved in the synthesis of the hemicellulose glucuronoxylan, a major component of secondary cell walls. Probably involved in the elongation of glucuronoxylan xylosyl backbone, especially in the formation of GlcUA side chain of xylans. The sequence is that of Probable beta-1,4-xylosyltransferase IRX10 (IRX10) from Arabidopsis thaliana (Mouse-ear cress).